Consider the following 260-residue polypeptide: POLG alternative reading frame (260 aa).

Disordered stretches follow at residues 1–50 (MEPK…LRPR) and 108–219 (ARRG…RRGG). 3 stretches are compositionally biased toward low complexity: residues 36–48 (AGSSSGALGLQLR), 116–154 (GRGAPQRRAPAEARALGAASRALARRGAAPAAPLRGQPG), and 164–186 (AEPALPGGGQLAVAGPAAPEAPG). A required for nucleolar localization region spans residues 104-130 (ANLRARRGDAWRGRGAPQRRAPAEARA). Gly residues-rich tracts occupy residues 187-199 (LGLGGGLDPVRPR) and 209-219 (RGAGPGVRRGG).

As to quaternary structure, interacts with C1QBP; the interaction results in nucleolar localization of C1QBP, probably due to prevention of C1QBP maturation and redirection from mitochondria to nucleoli. In terms of processing, undergoes proteolytic cleavage to produce a secreted C-terminal fragment.

It is found in the nucleus. The protein localises to the nucleolus. The protein resides in the secreted. This Homo sapiens (Human) protein is POLG alternative reading frame.